The chain runs to 247 residues: Anionic trypsin (247 aa).

A signal peptide spans 1 to 15; it reads MNPLLILAFLGAAVA. Residues 16–23 constitute a propeptide, activation peptide; sequence TPTDDDDK. Residues 24–244 enclose the Peptidase S1 domain; it reads IVGGYTCEEN…FVDWIQSTIA (221 aa). 6 disulfide bridges follow: Cys30/Cys160, Cys48/Cys64, Cys132/Cys233, Cys139/Cys206, Cys171/Cys185, and Cys196/Cys220. His63 acts as the Charge relay system in catalysis. Ca(2+) is bound by residues Glu75, Asn77, Val80, and Glu85. Asp107 functions as the Charge relay system in the catalytic mechanism. Ser200 (charge relay system) is an active-site residue.

The protein belongs to the peptidase S1 family. Requires Ca(2+) as cofactor.

It is found in the secreted. The protein resides in the extracellular space. The catalysed reaction is Preferential cleavage: Arg-|-Xaa, Lys-|-Xaa.. The protein is Anionic trypsin of Canis lupus familiaris (Dog).